Reading from the N-terminus, the 68-residue chain is UPF0435 protein SA1696 (68 aa).

It belongs to the UPF0435 family.

This chain is UPF0435 protein SA1696, found in Staphylococcus aureus (strain N315).